A 293-amino-acid polypeptide reads, in one-letter code: 4-diphosphocytidyl-2-C-methyl-D-erythritol kinase (293 aa).

Residue K10 is part of the active site. Residue 96–106 (PIAAGLGGGSS) participates in ATP binding. D138 is a catalytic residue.

The protein belongs to the GHMP kinase family. IspE subfamily.

The catalysed reaction is 4-CDP-2-C-methyl-D-erythritol + ATP = 4-CDP-2-C-methyl-D-erythritol 2-phosphate + ADP + H(+). It functions in the pathway isoprenoid biosynthesis; isopentenyl diphosphate biosynthesis via DXP pathway; isopentenyl diphosphate from 1-deoxy-D-xylulose 5-phosphate: step 3/6. Functionally, catalyzes the phosphorylation of the position 2 hydroxy group of 4-diphosphocytidyl-2C-methyl-D-erythritol. This Caulobacter sp. (strain K31) protein is 4-diphosphocytidyl-2-C-methyl-D-erythritol kinase.